The chain runs to 136 residues: Peptide methionine sulfoxide reductase MsrB (136 aa).

A MsrB domain is found at 6–128 (EVSLYKELTD…NSAALSFTDE (123 aa)). Zn(2+)-binding residues include Cys-45, Cys-48, Cys-94, and Cys-97. Catalysis depends on Cys-117, which acts as the Nucleophile.

It belongs to the MsrB Met sulfoxide reductase family. The cofactor is Zn(2+).

The enzyme catalyses L-methionyl-[protein] + [thioredoxin]-disulfide + H2O = L-methionyl-(R)-S-oxide-[protein] + [thioredoxin]-dithiol. This Photorhabdus laumondii subsp. laumondii (strain DSM 15139 / CIP 105565 / TT01) (Photorhabdus luminescens subsp. laumondii) protein is Peptide methionine sulfoxide reductase MsrB.